Reading from the N-terminus, the 255-residue chain is Polycomb group RING finger protein 5 (255 aa).

The RING-type zinc finger occupies 18-57 (CYICKGYLIKPTTVTECLHTFCKTCIVQHFEDSNDCPRCG). Residues 97 to 132 (WKKNKPQENGQDDMSKVDKPKVDEEGDENQDDKDYH) form a disordered region. A compositionally biased stretch (basic and acidic residues) spans 109–119 (DMSKVDKPKVD).

As to quaternary structure, component of a PRC1-like complex that contains PCGF5, RNF2 and UBE2D3. Interacts with RNF2; the interaction is direct. Interacts with CBX6, CBX7 and CBX8. Interacts with AUTS2; the interaction is direct. Identified in a complex that contains AUTS2, PCGF5, CSNK2B and RNF2.

It localises to the nucleus. The protein localises to the nucleoplasm. In terms of biological role, component of a Polycomb group (PcG) multiprotein PRC1-like complex, a complex class required to maintain the transcriptionally repressive state of many genes, including Hox genes, throughout development. PcG PRC1 complex acts via chromatin remodeling and modification of histones; it mediates monoubiquitination of histone H2A 'Lys-119', rendering chromatin heritably changed in its expressibility. Within the PRC1-like complex, regulates RNF2 ubiquitin ligase activity. Plays a redundant role with PCGF3 as part of a PRC1-like complex that mediates monoubiquitination of histone H2A 'Lys-119' on the X chromosome and is required for normal silencing of one copy of the X chromosome in XX females. The polypeptide is Polycomb group RING finger protein 5 (PCGF5) (Bos taurus (Bovine)).